Reading from the N-terminus, the 127-residue chain is 3-aminoacrylate deaminase RutC (127 aa).

It belongs to the RutC family.

It catalyses the reaction (Z)-3-aminoacrylate + H2O + H(+) = 3-oxopropanoate + NH4(+). Functionally, involved in pyrimidine catabolism. Catalyzes the deamination of 3-aminoacrylate to malonic semialdehyde, a reaction that can also occur spontaneously. RutC may facilitate the reaction and modulate the metabolic fitness, rather than catalyzing essential functions. The sequence is that of 3-aminoacrylate deaminase RutC from Pseudomonas savastanoi pv. phaseolicola (strain 1448A / Race 6) (Pseudomonas syringae pv. phaseolicola (strain 1448A / Race 6)).